Here is a 125-residue protein sequence, read N- to C-terminus: Glycine cleavage system H protein (125 aa).

One can recognise a Lipoyl-binding domain in the interval 23–104; it reads VVYIGITDYA…PYENWILKVK (82 aa). K64 is modified (N6-lipoyllysine).

This sequence belongs to the GcvH family. In terms of assembly, the glycine cleavage system is composed of four proteins: P, T, L and H. (R)-lipoate serves as cofactor.

Its function is as follows. The glycine cleavage system catalyzes the degradation of glycine. The H protein shuttles the methylamine group of glycine from the P protein to the T protein. The protein is Glycine cleavage system H protein of Clostridioides difficile (strain 630) (Peptoclostridium difficile).